We begin with the raw amino-acid sequence, 1755 residues long: MESQQLSQHSPISHGSACASVTSKEVQTTQDPLDISASKTEECEKVSTQANSQQPTTPLSSAVPENHHHASPQAAQVPLPQNGPYPQQRMMNTQQANISGWPVYGHPSLMPYPPYQMSPMYAPPGAQSQFTQYPQYVGTHLNTPSPESGNSFPDSSSAKSNMTSTNQHVRPPPILTSPNDFLNWVKIYIKFLQNSNLGDIIPTATRKAVRQMTDDELTFLCHTFQLFAPSQFLPPWVKDILSVDYTDIMKILSKSINKMQSDTQEVNDITTLATLHYNGSTPADAFEAEVTNILDRLNNNGIPINNKVACQFIMRGLSGEYKFLRYARHRCIHMTVADLFSDIHSMYEEQQESKRNKSTHRRSPSDEKKDSRTYTNTTKPKSITRNSQKPNNSQSRTARAHNVSTFNNSPGPDNDLIRGSTTEPIQLKNTHDLHLGQELTESTVNHTNHSDDKLPGHLLLDSGASRTLIRSAHHIHSASSNPDINVVDAQKRNIPINAIGDLQFHFQDNTKTSIKVLHTPNIAYDLLSLNELAAVDITACFTKNVLERSDGTVLAPIVKYGDFYWVSKKYLLPSNISVPTINNVHTSESTRKYPYPFIHRMLAHANAQTIRYSLKNNTITYFNESDVDWSSAIDYQCPDCLIGKSTKHRHIKGSRLKYQNSYEPFQYLHTDIFGPVHNLPKSAPSYFISFTDETTKFRWVYPLHDRREDSILDVFTTILAFIKNQFQASVLVIQMDRGSEYTNRTLHKFLEKNGITPCYTTTADSRAHGVAERLNRTLLDDCRTQLQCSGLPNHLWFSAIEFSTIVRNSLASPKSKKSARQHAGLAGLDISTLLPFGQPVIVNDHNPNSKIHPRGIPGYALHPSRNSYGYIIYLPSLKKTVDTTNYVILQGKESRLDQFNYDALTFDEDLNRLTASYHSFIASNEIQQSNDLNIESDHDFQSDIELHPEQLRNVLSKAVSPTDSTPPSTHTEDSKRVSKTNIRAPREVDPNISESNILPSKKRSSTPQISDIESTGSGGMHRLDVPLLAPMSQSNTHESSHASKSKDFRHSDSYSDNETNHTNVPISSTGGTNNKTVPQTSEQETEKRIIHRSPSIDTSSSESNSLHHVVPIKTSDTCPKENTEESIIADLPLPDLPPEPPTELSDSFKELPPINSRQTNSSLGGIGDSNAYTTINSKKRSLEDNETEIKVSRDTWNTKNMRSLEPPRSKKRIHLIAAVKAVKSIKPIRTTLRYDEAITYNKDIKEKEKYIEAYHKEVNQLLKMKTWDTDKYYDRKEIDPKRVINSMFIFNRKRDGTHKARFVARGDIQHPDTYDSGMQSNTVHHYALMTSLSLALDNNYYITQLDISSAYLYADIKEELYIRPPPHLGMNDKLIRLKKSLYGLKQSGANWYETIKSYLIKQCGMEEVRGWSCVFENSQVTICLFVDDMVLFSKNLNSNKRIIDKLKMQYDTKIINLGESDEEIQYDILGLEIKYQRGKYMKLGMENSLTEKIPKLNVPLNPKGRKLSAPGQPGLYIDQQELELEEDDYKMKVHEMQKLIGLASYVGYKFRFDLLYYINTLAQHILFPSKQVLDMTYELIQFIWNTRDKQLIWHKSKPVKPTNKLVVISDASYGNQPYYKSQIGNIYLLNGKVIGGKSTKASLTCTSTTEAEIHAISESVPLLNNLSYLIQELDKKPITKGLLTDSKSTISIIISNNEEKFRNRFFGTKAMRLRDEVSGNHLHVCYIETKKNIADVMTKPLPIKTFKLLTNKWIH.

3 stretches are compositionally biased toward polar residues: residues 1–31 (MESQ…TTQD), 46–60 (VSTQ…TPLS), and 137–168 (VGTH…TNQH). Disordered regions lie at residues 1 to 88 (MESQ…YPQQ), 137 to 174 (VGTH…PPPI), and 350 to 420 (QQES…IRGS). Positions 299–401 (NNGIPINNKV…NSQSRTARAH (103 aa)) are RNA-binding. Basic and acidic residues predominate over residues 363-372 (SPSDEKKDSR). Polar residues predominate over residues 373 to 411 (TYTNTTKPKSITRNSQKPNNSQSRTARAHNVSTFNNSPG). D461 serves as the catalytic For protease activity; shared with dimeric partner. The interval 583 to 640 (NVHTSESTRKYPYPFIHRMLAHANAQTIRYSLKNNTITYFNESDVDWSSAIDYQCPDC) is integrase-type zinc finger-like. Residues 660–835 (NSYEPFQYLH…AGLDISTLLP (176 aa)) form the Integrase catalytic domain. 2 residues coordinate Mg(2+): D671 and D736. A disordered region spans residues 958-1172 (AVSPTDSTPP…LGGIGDSNAY (215 aa)). Residues 960–969 (SPTDSTPPST) are compositionally biased toward low complexity. Positions 1005–1015 (STPQISDIEST) are enriched in polar residues. Residues 1038–1053 (ESSHASKSKDFRHSDS) are compositionally biased toward basic and acidic residues. Polar residues-rich tracts occupy residues 1054 to 1082 (YSDN…QTSE) and 1095 to 1106 (SIDTSSSESNSL). Positions 1178–1212 (KKRSLEDNETEIKVSRDTWNTKNMRSLEPPRSKKR) match the Bipartite nuclear localization signal motif. The Reverse transcriptase Ty1/copia-type domain occupies 1338–1476 (NNYYITQLDI…DILGLEIKYQ (139 aa)). Residues D1346, D1427, D1428, D1610, E1652, and D1685 each contribute to the Mg(2+) site. The region spanning 1610–1752 (DASYGNQPYY…IKTFKLLTNK (143 aa)) is the RNase H Ty1/copia-type domain.

The capsid protein forms a homotrimer, from which the VLPs are assembled. The protease is a homodimer, whose active site consists of two apposed aspartic acid residues. Initially, virus-like particles (VLPs) are composed of the structural unprocessed proteins Gag and Gag-Pol, and also contain the host initiator methionine tRNA (tRNA(i)-Met) which serves as a primer for minus-strand DNA synthesis, and a dimer of genomic Ty RNA. Processing of the polyproteins occurs within the particle and proceeds by an ordered pathway, called maturation. First, the protease (PR) is released by autocatalytic cleavage of the Gag-Pol polyprotein yielding capsid protein p45 and a Pol-p154 precursor protein. This cleavage is a prerequisite for subsequent processing of Pol-p154 at the remaining sites to release the mature structural and catalytic proteins. Maturation takes place prior to the RT reaction and is required to produce transposition-competent VLPs.

It is found in the cytoplasm. The protein resides in the nucleus. It catalyses the reaction DNA(n) + a 2'-deoxyribonucleoside 5'-triphosphate = DNA(n+1) + diphosphate. The enzyme catalyses Endonucleolytic cleavage to 5'-phosphomonoester.. Functionally, capsid protein (CA) is the structural component of the virus-like particle (VLP), forming the shell that encapsulates the retrotransposons dimeric RNA genome. The particles are assembled from trimer-clustered units and there are holes in the capsid shells that allow for the diffusion of macromolecules. CA also has nucleocapsid-like chaperone activity, promoting primer tRNA(i)-Met annealing to the multipartite primer-binding site (PBS), dimerization of Ty1 RNA and initiation of reverse transcription. The aspartyl protease (PR) mediates the proteolytic cleavages of the Gag and Gag-Pol polyproteins after assembly of the VLP. In terms of biological role, reverse transcriptase/ribonuclease H (RT) is a multifunctional enzyme that catalyzes the conversion of the retro-elements RNA genome into dsDNA within the VLP. The enzyme displays a DNA polymerase activity that can copy either DNA or RNA templates, and a ribonuclease H (RNase H) activity that cleaves the RNA strand of RNA-DNA heteroduplexes during plus-strand synthesis and hydrolyzes RNA primers. The conversion leads to a linear dsDNA copy of the retrotransposon that includes long terminal repeats (LTRs) at both ends. Its function is as follows. Integrase (IN) targets the VLP to the nucleus, where a subparticle preintegration complex (PIC) containing at least integrase and the newly synthesized dsDNA copy of the retrotransposon must transit the nuclear membrane. Once in the nucleus, integrase performs the integration of the dsDNA into the host genome. In Saccharomyces cerevisiae (strain ATCC 204508 / S288c) (Baker's yeast), this protein is Transposon Ty1-MR1 Gag-Pol polyprotein (TY1B-MR1).